A 73-amino-acid polypeptide reads, in one-letter code: Carboxysome shell vertex protein CsoS4B (73 aa).

The 68-residue stretch at 1 to 68 (MVCTQRVAGL…TDLTIGGIID (68 aa)) folds into the BMV domain.

The protein belongs to the CcmL/EutN family. CsoS4 subfamily. Homopentamer.

It is found in the carboxysome. Probably forms vertices in the carboxysome, a polyhedral inclusion where RuBisCO (ribulose bisphosphate carboxylase, cbbL-cbbS) is sequestered. Has been modeled to induce curvature upon insertion into an otherwise flat hexagonal layer of major carboxysome subunits. Has not been identified in purified carboxysomes; it is expected to be present in very low amounts. The sequence is that of Carboxysome shell vertex protein CsoS4B from Prochlorococcus marinus subsp. pastoris (strain CCMP1986 / NIES-2087 / MED4).